Here is a 557-residue protein sequence, read N- to C-terminus: TBCC domain-containing protein 1 (557 aa).

The C-CAP/cofactor C-like domain occupies 290–435 (TTKRAKIACN…LEDHMARTGL (146 aa)).

Belongs to the TBCC family.

The protein localises to the cytoplasm. It localises to the cytoskeleton. The protein resides in the microtubule organizing center. It is found in the centrosome. Its subcellular location is the spindle pole. Functionally, plays a role in the regulation of centrosome and Golgi apparatus positioning, with consequences on cell shape and cell migration. The polypeptide is TBCC domain-containing protein 1 (TBCCD1) (Homo sapiens (Human)).